Reading from the N-terminus, the 409-residue chain is Translation initiation factor 2 subunit gamma (409 aa).

A tr-type G domain is found at 7–203 (QPEVNIGLVG…AIEREIPTPE (197 aa)). The segment at 16–23 (GHVDHGKT) is G1. 4 residues coordinate Mg(2+): aspartate 19, threonine 23, glycine 44, and serine 46. Residue 19–24 (DHGKTT) participates in GTP binding. Residues 44–48 (GISIR) form a G2 region. The interval 90-93 (DAPG) is G3. GTP-binding positions include 146–149 (NKID) and 181–183 (SAQ). The segment at 146–149 (NKID) is G4. The segment at 181–183 (SAQ) is G5.

It belongs to the TRAFAC class translation factor GTPase superfamily. Classic translation factor GTPase family. EIF2G subfamily. As to quaternary structure, heterotrimer composed of an alpha, a beta and a gamma chain. It depends on Mg(2+) as a cofactor.

The catalysed reaction is GTP + H2O = GDP + phosphate + H(+). Functionally, eIF-2 functions in the early steps of protein synthesis by forming a ternary complex with GTP and initiator tRNA. The polypeptide is Translation initiation factor 2 subunit gamma (Haloquadratum walsbyi (strain DSM 16790 / HBSQ001)).